A 693-amino-acid chain; its full sequence is Sodium-dependent phosphate transport protein 2B (693 aa).

A disordered region spans residues 1–46; the sequence is MAPWPELENSQPTSEKYTVKADGEQSAKPEKAKETEKDDTGTPITK. Residues 1–89 lie on the Cytoplasmic side of the membrane; it reads MAPWPELENS…KWSERDTKGK (89 aa). The span at 17–40 shows a compositional bias: basic and acidic residues; sequence YTVKADGEQSAKPEKAKETEKDDT. Residues 90–110 form a helical membrane-spanning segment; the sequence is ILCVFQGIGKFILLLVFLYFF. Topologically, residues 111–135 are extracellular; the sequence is VCSLDVLSSAFQLVGGKVAGKFFNN. A helical membrane pass occupies residues 136-156; that stretch reads NSIMSNPLAGMVIGVLVTVLV. At 157–212 the chain is on the cytoplasmic side; the sequence is QSSSTSTSIVVSMVASSLLPVHAAIPIIMGANIGTSITNTIVALMQAGDRKEFRRA. The chain crosses the membrane as a helical span at residues 213-233; the sequence is FAGATVHDFFNWLSVLVLLPL. Residues 234 to 361 are Extracellular-facing; sequence EAATGYLERL…IFVNFNLSDA (128 aa). Cysteines 302 and 349 form a disulfide. N-linked (GlcNAc...) asparagine glycans are attached at residues asparagine 307 and asparagine 320. The helical transmembrane segment at 362-382 threads the bilayer; it reads IVGTILLITSLLILCTCLILI. Residues 383–408 are Cytoplasmic-facing; that stretch reads VKLLGSVLRGQVAAVIKKTINTDFPY. A helical membrane pass occupies residues 409–429; it reads PFSWVTGYLAILVGAGMTFIV. Topologically, residues 430 to 485 are extracellular; it reads QSSSVFTSAMTPLIGIGVISIQRAYPLTLGANIGTTTTAILAALASPGSTLKSSLQ. Residues 486–506 traverse the membrane as a helical segment; that stretch reads IALCHFFFNISGIILWYPIPF. At 507-525 the chain is on the cytoplasmic side; it reads TRLPIRLAKGLGNISSKYR. The helical transmembrane segment at 526 to 546 threads the bilayer; it reads WFAIVYLIVFFLLIPLAVFGL. The Extracellular portion of the chain corresponds to 547–550; it reads SLIG. A helical membrane pass occupies residues 551 to 571; the sequence is WPVLVGVASPIVLVILLVVVL. At 572–693 the chain is on the cytoplasmic side; the sequence is KILQSFCPGS…TKIVSSVTAL (122 aa).

Belongs to the SLC34A transporter family. Glycosylated.

It localises to the apical cell membrane. It carries out the reaction 3 Na(+)(out) + phosphate(out) = 3 Na(+)(in) + phosphate(in). In terms of biological role, involved in actively transporting phosphate into cells via Na(+) cotransport. In Bos taurus (Bovine), this protein is Sodium-dependent phosphate transport protein 2B (SLC34A2).